The primary structure comprises 564 residues: Proline--tRNA ligase 1 (564 aa).

Belongs to the class-II aminoacyl-tRNA synthetase family. ProS type 1 subfamily. In terms of assembly, homodimer.

It is found in the cytoplasm. The enzyme catalyses tRNA(Pro) + L-proline + ATP = L-prolyl-tRNA(Pro) + AMP + diphosphate. In terms of biological role, catalyzes the attachment of proline to tRNA(Pro) in a two-step reaction: proline is first activated by ATP to form Pro-AMP and then transferred to the acceptor end of tRNA(Pro). As ProRS can inadvertently accommodate and process non-cognate amino acids such as alanine and cysteine, to avoid such errors it has two additional distinct editing activities against alanine. One activity is designated as 'pretransfer' editing and involves the tRNA(Pro)-independent hydrolysis of activated Ala-AMP. The other activity is designated 'posttransfer' editing and involves deacylation of mischarged Ala-tRNA(Pro). The misacylated Cys-tRNA(Pro) is not edited by ProRS. The polypeptide is Proline--tRNA ligase 1 (Streptomyces avermitilis (strain ATCC 31267 / DSM 46492 / JCM 5070 / NBRC 14893 / NCIMB 12804 / NRRL 8165 / MA-4680)).